An 82-amino-acid polypeptide reads, in one-letter code: Turripeptide Gsg9.1 (82 aa).

The signal sequence occupies residues 1–23 (MMAKLMITVMTVFFLSLQQGADG). A propeptide spanning residues 24-46 (LFERWRKNQMAASRIMGNLITAR) is cleaved from the precursor. A 4-hydroxyproline mark is found at proline 49 and proline 50. 3 cysteine pairs are disulfide-bonded: cysteine 53–cysteine 68, cysteine 58–cysteine 72, and cysteine 64–cysteine 79. A 4-carboxyglutamate mark is found at glutamate 60 and glutamate 63.

It belongs to the Pg turripeptide superfamily. In terms of tissue distribution, expressed by the venom duct.

The protein resides in the secreted. This is Turripeptide Gsg9.1 from Gemmula sogodensis (Gem-turris).